Consider the following 964-residue polypeptide: Phosphoenolpyruvate carboxylase (964 aa).

Serine 11 carries the post-translational modification Phosphoserine. Active-site residues include histidine 172 and lysine 600.

The protein belongs to the PEPCase type 1 family. As to quaternary structure, homotetramer. Requires Mg(2+) as cofactor.

The protein resides in the cytoplasm. The enzyme catalyses oxaloacetate + phosphate = phosphoenolpyruvate + hydrogencarbonate. It functions in the pathway photosynthesis; C4 acid pathway. With respect to regulation, by light-reversible phosphorylation. Through the carboxylation of phosphoenolpyruvate (PEP) it forms oxaloacetate, a four-carbon dicarboxylic acid source for the tricarboxylic acid cycle. This is Phosphoenolpyruvate carboxylase from Amaranthus hypochondriacus (Prince-of-Wales feather).